The primary structure comprises 419 residues: Serine--tRNA ligase (419 aa).

Residue 226-228 (TSE) participates in L-serine binding. ATP contacts are provided by residues 257 to 259 (RRE) and valine 273. Glutamate 280 serves as a coordination point for L-serine. 344–347 (ELTS) provides a ligand contact to ATP. Threonine 379 provides a ligand contact to L-serine.

It belongs to the class-II aminoacyl-tRNA synthetase family. Type-1 seryl-tRNA synthetase subfamily. As to quaternary structure, homodimer. The tRNA molecule binds across the dimer.

The protein localises to the cytoplasm. The catalysed reaction is tRNA(Ser) + L-serine + ATP = L-seryl-tRNA(Ser) + AMP + diphosphate + H(+). It catalyses the reaction tRNA(Sec) + L-serine + ATP = L-seryl-tRNA(Sec) + AMP + diphosphate + H(+). The protein operates within aminoacyl-tRNA biosynthesis; selenocysteinyl-tRNA(Sec) biosynthesis; L-seryl-tRNA(Sec) from L-serine and tRNA(Sec): step 1/1. Functionally, catalyzes the attachment of serine to tRNA(Ser). Is also able to aminoacylate tRNA(Sec) with serine, to form the misacylated tRNA L-seryl-tRNA(Sec), which will be further converted into selenocysteinyl-tRNA(Sec). In Corynebacterium diphtheriae (strain ATCC 700971 / NCTC 13129 / Biotype gravis), this protein is Serine--tRNA ligase.